The sequence spans 188 residues: dCTP deaminase (188 aa).

Residues 111–116 (KSTYAR), 135–137 (TLE), Q156, Y170, and Q180 contribute to the dCTP site. The active-site Proton donor/acceptor is E137.

The protein belongs to the dCTP deaminase family. As to quaternary structure, homotrimer.

It catalyses the reaction dCTP + H2O + H(+) = dUTP + NH4(+). It participates in pyrimidine metabolism; dUMP biosynthesis; dUMP from dCTP (dUTP route): step 1/2. In terms of biological role, catalyzes the deamination of dCTP to dUTP. In Ralstonia pickettii (strain 12J), this protein is dCTP deaminase.